We begin with the raw amino-acid sequence, 326 residues long: tRNA-modifying protein YgfZ (326 aa).

Tryptophan 27 and tryptophan 189 together coordinate folate.

The protein belongs to the tRNA-modifying YgfZ family.

Its subcellular location is the cytoplasm. Folate-binding protein involved in regulating the level of ATP-DnaA and in the modification of some tRNAs. It is probably a key factor in regulatory networks that act via tRNA modification, such as initiation of chromosomal replication. The protein is tRNA-modifying protein YgfZ of Escherichia coli (strain SE11).